We begin with the raw amino-acid sequence, 123 residues long: Ribosome-binding factor A (123 aa).

Belongs to the RbfA family. In terms of assembly, monomer. Binds 30S ribosomal subunits, but not 50S ribosomal subunits or 70S ribosomes.

The protein resides in the cytoplasm. Functionally, one of several proteins that assist in the late maturation steps of the functional core of the 30S ribosomal subunit. Associates with free 30S ribosomal subunits (but not with 30S subunits that are part of 70S ribosomes or polysomes). Required for efficient processing of 16S rRNA. May interact with the 5'-terminal helix region of 16S rRNA. This Syntrophus aciditrophicus (strain SB) protein is Ribosome-binding factor A.